The chain runs to 811 residues: DEAD-box ATP-dependent RNA helicase 48 (811 aa).

2 disordered regions span residues Met1–Leu32 and Asp93–Leu138. The span at Trp15–Glu29 shows a compositional bias: basic residues. Basic and acidic residues-rich tracts occupy residues Gly95 to Arg104 and Gly117 to Leu138. Positions Arg286–Ser333 form a coiled coil. The short motif at Lys342 to Glu370 is the Q motif element. In terms of domain architecture, Helicase ATP-binding spans Leu373–Phe556. Ala386–Ser393 contributes to the ATP binding site. Positions Asp504–Asp507 match the DEAD box motif. Positions Lys570 to Ile740 constitute a Helicase C-terminal domain.

This sequence belongs to the DEAD box helicase family.

It catalyses the reaction ATP + H2O = ADP + phosphate + H(+). This is DEAD-box ATP-dependent RNA helicase 48 from Oryza sativa subsp. japonica (Rice).